Reading from the N-terminus, the 398-residue chain is 1-deoxy-D-xylulose 5-phosphate reductoisomerase (398 aa).

Thr10, Gly11, Ser12, Ile13, Gly36, Lys37, Asn38, and Asn124 together coordinate NADPH. Residue Lys125 participates in 1-deoxy-D-xylulose 5-phosphate binding. Glu126 is an NADPH binding site. Position 150 (Asp150) interacts with Mn(2+). Ser151, Glu152, Ser186, and His209 together coordinate 1-deoxy-D-xylulose 5-phosphate. Residue Glu152 coordinates Mn(2+). Gly215 lines the NADPH pocket. The 1-deoxy-D-xylulose 5-phosphate site is built by Ser222, Asn227, Lys228, and Glu231. Glu231 is a Mn(2+) binding site.

The protein belongs to the DXR family. In terms of assembly, homodimer. Mg(2+) serves as cofactor. Mn(2+) is required as a cofactor.

The enzyme catalyses 2-C-methyl-D-erythritol 4-phosphate + NADP(+) = 1-deoxy-D-xylulose 5-phosphate + NADPH + H(+). Its pathway is isoprenoid biosynthesis; isopentenyl diphosphate biosynthesis via DXP pathway; isopentenyl diphosphate from 1-deoxy-D-xylulose 5-phosphate: step 1/6. In terms of biological role, catalyzes the NADPH-dependent rearrangement and reduction of 1-deoxy-D-xylulose-5-phosphate (DXP) to 2-C-methyl-D-erythritol 4-phosphate (MEP). The sequence is that of 1-deoxy-D-xylulose 5-phosphate reductoisomerase from Salmonella choleraesuis (strain SC-B67).